The chain runs to 205 residues: MNRKGGLFSSQERVKQYVSHTDAAAAKQIQTILSSSLRKAAGKPIVVVCIGTDRSTGDSLGPLVGMKLKQMQLTRFHVYGTLSDPVHAVNMKDKINDIHKLHKNPFVIAVDACLGRVKSVGSFQIGDGPLKPGAGVQKDLPEVGDLHINGIVNVSGFMEYFVLQNTRLNLVMNMANVLAEGLSLTDRTEWRQERLNPLQRLTGRI.

This is an uncharacterized protein from Bacillus subtilis (strain 168).